The following is a 93-amino-acid chain: DNA-directed RNA polymerase subunit omega (93 aa).

The protein belongs to the RNA polymerase subunit omega family. The RNAP catalytic core consists of 2 alpha, 1 beta, 1 beta' and 1 omega subunit. When a sigma factor is associated with the core the holoenzyme is formed, which can initiate transcription.

It carries out the reaction RNA(n) + a ribonucleoside 5'-triphosphate = RNA(n+1) + diphosphate. Its function is as follows. Promotes RNA polymerase assembly. Latches the N- and C-terminal regions of the beta' subunit thereby facilitating its interaction with the beta and alpha subunits. In Actinobacillus pleuropneumoniae serotype 3 (strain JL03), this protein is DNA-directed RNA polymerase subunit omega.